A 197-amino-acid chain; its full sequence is V-type ATP synthase subunit E 2 (197 aa).

Belongs to the V-ATPase E subunit family.

Functionally, produces ATP from ADP in the presence of a proton gradient across the membrane. This Clostridium tetani (strain Massachusetts / E88) protein is V-type ATP synthase subunit E 2.